The chain runs to 415 residues: Serine--tRNA ligase (415 aa).

Residue 231–233 (TAE) coordinates L-serine. Position 262–264 (262–264 (RSE)) interacts with ATP. E285 lines the L-serine pocket. 349 to 352 (EISS) contributes to the ATP binding site. S383 lines the L-serine pocket.

It belongs to the class-II aminoacyl-tRNA synthetase family. Type-1 seryl-tRNA synthetase subfamily. Homodimer. The tRNA molecule binds across the dimer.

The protein localises to the cytoplasm. It carries out the reaction tRNA(Ser) + L-serine + ATP = L-seryl-tRNA(Ser) + AMP + diphosphate + H(+). The catalysed reaction is tRNA(Sec) + L-serine + ATP = L-seryl-tRNA(Sec) + AMP + diphosphate + H(+). It functions in the pathway aminoacyl-tRNA biosynthesis; selenocysteinyl-tRNA(Sec) biosynthesis; L-seryl-tRNA(Sec) from L-serine and tRNA(Sec): step 1/1. Functionally, catalyzes the attachment of serine to tRNA(Ser). Is also able to aminoacylate tRNA(Sec) with serine, to form the misacylated tRNA L-seryl-tRNA(Sec), which will be further converted into selenocysteinyl-tRNA(Sec). The chain is Serine--tRNA ligase from Helicobacter pylori (strain J99 / ATCC 700824) (Campylobacter pylori J99).